A 401-amino-acid chain; its full sequence is Probable E3 ubiquitin-protein ligase RHC2A (401 aa).

The interval 41-93 (TPSDSFTTTTTTQHRSPTRFPPPSSSSSTPSASMHADNSPTPTIVTRTRSNRS) is disordered. The span at 76-93 (ADNSPTPTIVTRTRSNRS) shows a compositional bias: polar residues. The RING-type; atypical zinc finger occupies 201 to 242 (CAVCKENFVLKSSAREMPCNHIYHPDCILPWLAIRNSCPVCR).

It carries out the reaction S-ubiquitinyl-[E2 ubiquitin-conjugating enzyme]-L-cysteine + [acceptor protein]-L-lysine = [E2 ubiquitin-conjugating enzyme]-L-cysteine + N(6)-ubiquitinyl-[acceptor protein]-L-lysine.. It participates in protein modification; protein ubiquitination. Its function is as follows. Probable E3 ubiquitin-protein ligase that may possess E3 ubiquitin ligase activity in vitro. The sequence is that of Probable E3 ubiquitin-protein ligase RHC2A from Arabidopsis thaliana (Mouse-ear cress).